A 209-amino-acid chain; its full sequence is Guanylyl cyclase-activating protein 3 (209 aa).

Residue Gly-2 is the site of N-myristoyl glycine attachment. At Asn-3 the chain carries Deamidated asparagine. EF-hand domains follow at residues 15-50 (PTQE…QGLN), 52-87 (KANK…IMQE), 88-123 (KMEQ…VQAL), and 130-165 (SPEE…DQDL). Residues Asp-65, Asn-67, Asp-69, Glu-76, Asp-101, Asp-103, Asn-105, Ser-107, Glu-112, Asp-143, Asn-145, Asp-147, Glu-149, and Glu-154 each coordinate Ca(2+). The interval 187-209 (QPDMETDSSKSPDKAGLGKVKMK) is disordered.

As to expression, retina.

Its function is as follows. Stimulates guanylyl cyclase 1 (GC1) and GC2 when free calcium ions concentration is low and inhibits guanylyl cyclases when free calcium ions concentration is elevated. This Ca(2+)-sensitive regulation of guanylyl cyclase (GC) is a key event in recovery of the dark state of rod photoreceptors following light exposure. The polypeptide is Guanylyl cyclase-activating protein 3 (GUCA1C) (Homo sapiens (Human)).